Consider the following 380-residue polypeptide: MAPTIRKSHPLLKIINGSFIDLPSPANISAWWNFGSLLGVCLIAQIATGLFLAMHHTADTSLAFSSIAHICRDVNNGWLLRNLHANGASFFFICIYFHIGRGLYYGSYLYKETWNIGVILLFLVMATAFVGYVLPWGQMSFWGATVITNLLSAAPYIGPDLVQWIWGGFSVDNATLTRFFTFHFILPFIIAAASMINLLFLHQTGSSNPTGLNSNLDKVSFHPYFSYKDLLGFVIMLGALASLSTFAPNLLGDPDNFTPANPLVTPPHIKPEWYFLFAYAILRSIPNKLGGVLALLLSIMILFLMPIIHTSKLRSLMFRPIAKTFFWALIANTAILTWIGGQPVEDPFITIGQIASGLYFLIFVLLIPSLGLLENKLLKI.

4 helical membrane passes run 34 to 54 (FGSLLGVCLIAQIATGLFLAM), 78 to 99 (WLLRNLHANGASFFFICIYFHI), 114 to 134 (WNIGVILLFLVMATAFVGYVL), and 179 to 199 (FFTFHFILPFIIAAASMINLL). Positions 84 and 98 each coordinate heme b. His183 is a heme b binding site. His202 is a binding site for a ubiquinone. Transmembrane regions (helical) follow at residues 227 to 247 (YKDLLGFVIMLGALASLSTFA), 289 to 309 (LGGVLALLLSIMILFLMPIIH), 321 to 341 (IAKTFFWALIANTAILTWIGG), and 348 to 368 (FITIGQIASGLYFLIFVLLIP).

The protein belongs to the cytochrome b family. The cytochrome bc1 complex contains 3 respiratory subunits (MT-CYB, CYC1 and UQCRFS1), 2 core proteins (UQCRC1 and UQCRC2) and probably 6 low-molecular weight proteins. Requires heme b as cofactor.

Its subcellular location is the mitochondrion inner membrane. Functionally, component of the ubiquinol-cytochrome c reductase complex (complex III or cytochrome b-c1 complex) that is part of the mitochondrial respiratory chain. The b-c1 complex mediates electron transfer from ubiquinol to cytochrome c. Contributes to the generation of a proton gradient across the mitochondrial membrane that is then used for ATP synthesis. In Pelophylax plancyi (Korean pond frog), this protein is Cytochrome b (mt-cyb).